The primary structure comprises 533 residues: DELLA protein 2 (533 aa).

The segment covering 1-12 has biased composition (basic and acidic residues); it reads MKREHKLEHEDM. The disordered stretch occupies residues 1 to 24; the sequence is MKREHKLEHEDMSSGSGKSGVCWE. A DELLA motif motif is present at residues 31–35; sequence DELLA. Residues 157-522 enclose the GRAS domain; the sequence is VETQEKGIRL…RPLIATSAWK (366 aa). The segment at 164–218 is leucine repeat I (LRI); sequence IRLVHSLMACAEAVEQNNLKMAEALVKQIGYLAVSQEGAMRKVATYFAEGLARRI. Positions 166–203 are required for possible homodimerization; sequence LVHSLMACAEAVEQNNLKMAEALVKQIGYLAVSQEGAM. Positions 171-175 match the LxCxE motif; degenerate motif; sequence MACAE. A VHIID region spans residues 232–297; the sequence is QIHFYETCPN…GGPPAFRLTG (66 aa). The short motif at 263–267 is the VHIID element; the sequence is VHVID. Residues 311-343 form a leucine repeat II (LRII) region; it reads QVGWRLAQFAQTIHVQFEYRGFVANSLADLDAS. The tract at residues 355-443 is PFYRE; sequence VAVNSVFELH…EVYLGKQICN (89 aa). Positions 363-367 match the LXXLL motif; degenerate motif; it reads LHKLN. Positions 446–522 are SAW; it reads ACEGTDRVER…RPLIATSAWK (77 aa).

This sequence belongs to the GRAS family. DELLA subfamily. As to quaternary structure, may be a homodimer. Post-translationally, ubiquitinated. Upon GA application it is ubiquitinated, leading to its subsequent degradation.

It is found in the nucleus. In terms of biological role, probable transcriptional regulator that acts as a repressor of the gibberellin (GA) signaling pathway. Probably acts by participating in large multiprotein complexes that repress transcription of GA-inducible genes. Upon GA application, it is degraded by the proteasome, allowing the GA signaling pathway. Together with DELLA1, required to enable arbuscule development during arbuscular mycorrhizal (AM) symbiosis with AM fungi (e.g. Glomus versiforme) via the regulation of RAM1 which, in turn, regulates various AM genes (e.g. NSP1, NSP2, PT4, LEC5, RAM2, EXO70I, STR and RAD1). The protein is DELLA protein 2 of Medicago truncatula (Barrel medic).